We begin with the raw amino-acid sequence, 467 residues long: Putative vacuolar protein sorting-associated protein TDA6 (467 aa).

The helical transmembrane segment at 8 to 28 (ILLWFLIVDLSVIRALVLPPL) threads the bilayer. 3 N-linked (GlcNAc...) asparagine glycosylation sites follow: Asn61, Asn124, and Asn141.

Belongs to the VPS62 family.

The protein resides in the membrane. Functionally, involved in vacuolar protein sorting. This chain is Putative vacuolar protein sorting-associated protein TDA6 (TDA6), found in Saccharomyces cerevisiae (strain ATCC 204508 / S288c) (Baker's yeast).